Here is a 517-residue protein sequence, read N- to C-terminus: 3-hydroxyphenylacetate 6-hydroxylase (517 aa).

Cys-449 contributes to the heme binding site.

Belongs to the cytochrome P450 family.

The catalysed reaction is 3-hydroxyphenylacetate + NADH + O2 + H(+) = homogentisate + NAD(+) + H2O. It catalyses the reaction 3-hydroxyphenylacetate + NADPH + O2 + H(+) = homogentisate + NADP(+) + H2O. The enzyme catalyses 3,4-dihydroxyphenylacetate + NADH + O2 + H(+) = 2,4,5-trihydroxyphenylacetate + NAD(+) + H2O. It carries out the reaction 3,4-dihydroxyphenylacetate + NADPH + O2 + H(+) = 2,4,5-trihydroxyphenylacetate + NADP(+) + H2O. It participates in aromatic compound metabolism; phenylacetate degradation. Functionally, catalyzes the hydroxylation of 3-hydroxyphenylacetate and 3,4-dihydroxyphenylacetate to 2,5-dihydroxyphenylacetate (homogentisate) and 2,4,5-trihydroxyphenylacetate, respectively. Both of these compounds are used as substrate by homogentisate dioxygenase in the homogentisate pathway. The homogentisate pathway is used to catabolize phenylacetate and use it as a carbon source. Can also catalyze the hydroxylation of phenylacetate to 2-hydroxyphenylacetate at low efficiency to compensate for loss of phacA. The chain is 3-hydroxyphenylacetate 6-hydroxylase (phacB) from Emericella nidulans (Aspergillus nidulans).